Consider the following 189-residue polypeptide: Interleukin-23 subunit alpha (189 aa).

The signal sequence occupies residues 1–19 (MLGSRAVMLLLLLPWTAQG). A disulfide bridge links C77 with C89.

The protein belongs to the IL-6 superfamily. As to quaternary structure, heterodimer with IL12B; disulfide-linked. The heterodimer is known as interleukin IL-23. Interacts with IL23R; this interaction enables recruitment of IL12RB1. As to expression, secreted by activated dendritic and phagocytic cells and keratinocytes. Also expressed by dermal Langerhans cells (at protein level).

The protein resides in the secreted. Functionally, associates with IL12B to form the pro-inflammatory cytokine IL-23 that plays different roles in innate and adaptive immunity. Released by antigen-presenting cells such as dendritic cells or macrophages, binds to a heterodimeric receptor complex composed of IL12RB1 and IL23R to activate JAK2 and TYK2 which then phosphorylate the receptor to form a docking site leading to the phosphorylation of STAT3 and STAT4. This process leads to activation of several pathways including p38 MAPK or NF-kappa-B and promotes the production of pro-inflammatory cytokines such as interleukin-17A/IL17A. In turn, participates in the early and effective intracellular bacterial clearance. Promotes the expansion and survival of T-helper 17 cells, a CD4-positive helper T-cell subset that produces IL-17, as well as other IL-17-producing cells. The polypeptide is Interleukin-23 subunit alpha (IL23A) (Homo sapiens (Human)).